Reading from the N-terminus, the 93-residue chain is Large ribosomal subunit protein uL23cz/uL23cy (93 aa).

The protein belongs to the universal ribosomal protein uL23 family. Part of the 50S ribosomal subunit.

It localises to the plastid. The protein resides in the chloroplast. Its function is as follows. Binds to 23S rRNA. This is Large ribosomal subunit protein uL23cz/uL23cy (rpl23-A) from Piper cenocladum (Ant piper).